The sequence spans 59 residues: Large ribosomal subunit protein bL32 (59 aa).

Over residues 1–16 (MAVPKRKTSPSKRGMR) the composition is skewed to basic residues. Positions 1 to 20 (MAVPKRKTSPSKRGMRRSHD) are disordered.

Belongs to the bacterial ribosomal protein bL32 family.

In Sphingopyxis alaskensis (strain DSM 13593 / LMG 18877 / RB2256) (Sphingomonas alaskensis), this protein is Large ribosomal subunit protein bL32.